A 457-amino-acid chain; its full sequence is Acetate--CoA ligase [ADP-forming] II subunit alpha (457 aa).

Belongs to the acetate CoA ligase alpha subunit family. Heterotetramer of two alpha and two beta subunits.

It carries out the reaction acetate + ATP + CoA = acetyl-CoA + ADP + phosphate. Its function is as follows. Catalyzes the reversible formation of acetate and ATP from acetyl-CoA by using ADP and phosphate. Can use other substrates such as phenylacetyl-CoA, indoleacetyl-CoA and isobutyryl-CoA, but not succinyl-CoA. Seems to be involved primarily in the degradation of aryl-CoA esters to the corresponding acids. Participates in the conversion of acetyl-CoA to acetate and in the degradation of branched-chain amino acids via branched-chain-acyl-CoA esters. The chain is Acetate--CoA ligase [ADP-forming] II subunit alpha from Pyrococcus furiosus (strain ATCC 43587 / DSM 3638 / JCM 8422 / Vc1).